The primary structure comprises 321 residues: Glycerol-3-phosphate phosphatase (321 aa).

Residue Asp34 is the Nucleophile of the active site. Residues Asp34, Asp36, and Asp260 each coordinate Mg(2+). The active-site Proton donor is Asp36.

Belongs to the HAD-like hydrolase superfamily. CbbY/CbbZ/Gph/YieH family. Homodimer. Requires Mg(2+) as cofactor. Detected in all tissues including red cells, lymphocytes and cultured fibroblasts (at protein level). The highest activities occur in skeletal muscle and cardiac muscle.

It carries out the reaction O-phospho-L-tyrosyl-[protein] + H2O = L-tyrosyl-[protein] + phosphate. The enzyme catalyses sn-glycerol 1-phosphate + H2O = glycerol + phosphate. The catalysed reaction is sn-glycerol 3-phosphate + H2O = glycerol + phosphate. In terms of biological role, glycerol-3-phosphate phosphatase hydrolyzing glycerol-3-phosphate into glycerol. Thereby, regulates the cellular levels of glycerol-3-phosphate a metabolic intermediate of glucose, lipid and energy metabolism. Was also shown to have a 2-phosphoglycolate phosphatase activity and a tyrosine-protein phosphatase activity. However, their physiological relevance is unclear. In vitro, also has a phosphatase activity toward ADP, ATP, GDP and GTP. The chain is Glycerol-3-phosphate phosphatase from Homo sapiens (Human).